The following is a 623-amino-acid chain: Kelch repeat and BTB domain-containing protein 12 (623 aa).

The region spanning 31 to 98 (IDVVLTAEGE…MYNAALEINN (68 aa)) is the BTB domain. The BACK domain occupies 133 to 235 (CLGIYYFAKQ…NPSFLRQALR (103 aa)). Kelch repeat units follow at residues 386–436 (DLYV…TVNN), 437–492 (KLYV…VVNS), 494–547 (IYVL…STNA), and 553–603 (KLYV…LVAR).

This chain is Kelch repeat and BTB domain-containing protein 12 (KBTBD12), found in Homo sapiens (Human).